Consider the following 249-residue polypeptide: Type III pantothenate kinase (249 aa).

6 to 13 (DCGNSFIK) lines the ATP pocket. Substrate is bound by residues Y93 and 100-103 (GLDR). The active-site Proton acceptor is the D102. Position 122 (D122) interacts with K(+). T125 is an ATP binding site. T181 is a binding site for substrate.

This sequence belongs to the type III pantothenate kinase family. As to quaternary structure, homodimer. Requires NH4(+) as cofactor. The cofactor is K(+).

Its subcellular location is the cytoplasm. It catalyses the reaction (R)-pantothenate + ATP = (R)-4'-phosphopantothenate + ADP + H(+). It participates in cofactor biosynthesis; coenzyme A biosynthesis; CoA from (R)-pantothenate: step 1/5. In terms of biological role, catalyzes the phosphorylation of pantothenate (Pan), the first step in CoA biosynthesis. The sequence is that of Type III pantothenate kinase from Pseudomonas fluorescens (strain SBW25).